A 204-amino-acid polypeptide reads, in one-letter code: Small ribosomal subunit protein uS4c (204 aa).

Residues 90 to 150 (MRLDNILYRL…GKKTDQLKTI (61 aa)) enclose the S4 RNA-binding domain.

Belongs to the universal ribosomal protein uS4 family. In terms of assembly, part of the 30S ribosomal subunit. Contacts protein S5. The interaction surface between S4 and S5 is involved in control of translational fidelity.

The protein localises to the plastid. Its subcellular location is the chloroplast. Functionally, one of the primary rRNA binding proteins, it binds directly to 16S rRNA where it nucleates assembly of the body of the 30S subunit. Its function is as follows. With S5 and S12 plays an important role in translational accuracy. This is Small ribosomal subunit protein uS4c (rps4) from Gnetum parvifolium (Small-leaved jointfir).